A 475-amino-acid polypeptide reads, in one-letter code: Rho GTPase-activating protein 15 (475 aa).

The interval Met1–Ala22 is disordered. One can recognise a PH domain in the interval Val80 to Asp190. Residues Ser281–Phe470 form the Rho-GAP domain.

The protein resides in the cytoplasm. The protein localises to the membrane. In terms of biological role, GTPase activator for the Rho-type GTPases by converting them to an inactive GDP-bound state. In Gallus gallus (Chicken), this protein is Rho GTPase-activating protein 15 (ARHGAP15).